The following is a 253-amino-acid chain: Chitooligosaccharide deacetylase (253 aa).

Residues H61 and H126 each coordinate Mg(2+).

This sequence belongs to the YdjC deacetylase family. ChbG subfamily. In terms of assembly, homodimer. Requires Mg(2+) as cofactor.

It localises to the cytoplasm. The enzyme catalyses N,N'-diacetylchitobiose + H2O = N-acetyl-beta-D-glucosaminyl-(1-&gt;4)-D-glucosamine + acetate. It catalyses the reaction diacetylchitobiose-6'-phosphate + H2O = N'-monoacetylchitobiose-6'-phosphate + acetate. Its pathway is glycan degradation; chitin degradation. In terms of biological role, involved in the degradation of chitin. ChbG is essential for growth on the acetylated chitooligosaccharides chitobiose and chitotriose but is dispensable for growth on cellobiose and chitosan dimer, the deacetylated form of chitobiose. Deacetylation of chitobiose-6-P and chitotriose-6-P is necessary for both the activation of the chb promoter by the regulatory protein ChbR and the hydrolysis of phosphorylated beta-glucosides by the phospho-beta-glucosidase ChbF. Catalyzes the removal of only one acetyl group from chitobiose-6-P to yield monoacetylchitobiose-6-P, the inducer of ChbR and the substrate of ChbF. This chain is Chitooligosaccharide deacetylase, found in Yersinia pseudotuberculosis serotype O:1b (strain IP 31758).